The chain runs to 353 residues: UPF0283 membrane protein KPN78578_12740 (353 aa).

Helical transmembrane passes span 70–90 (MVSA…VQWT), 99–119 (WIAL…VGSL), and 213–233 (ESTL…FIAW).

The protein belongs to the UPF0283 family.

The protein localises to the cell inner membrane. The protein is UPF0283 membrane protein KPN78578_12740 of Klebsiella pneumoniae subsp. pneumoniae (strain ATCC 700721 / MGH 78578).